An 89-amino-acid polypeptide reads, in one-letter code: Terminase, small subunit gp18 (89 aa).

Positions 1–48 are helix-turn-helix (HTH); that stretch reads MEKDKSLITFLEMLDTAMAQRMLADLSDHERRSPQLYNAINKLLDRHK.

The protein belongs to the terminase small subunit family. As to quaternary structure, homooctamer. Interacts with the terminase large subunit gp19; the active complex is probably heterooligomeric.

In terms of biological role, plays a role in packaging a single copy of genome into the prohead. The terminase is composed of two subunits (a large and a small) and the small subunit recognizes a specific sequence in the viral DNA. Once the DNA is packaged, the terminase detaches from the connector and the tail replaces it to finish maturation of the virion. Packaging initiates by TerS recognizing the packaging sequence in the viral DNA. The nuclease activity of TerL cuts the viral DNA and the terminase-DNA complex binds to the portal of a procapsid shell. DNA is translocated into the capsid, powered by the packaging ATPase in TerL, which continues until the next site is encountered at which point the motor stops and again cuts the DNA to release the nucleocapsid filled with a unit-length genome ('unit length' packaging). Direct short terminal repeats at each end of the genome are duplicated in concert with packaging. The sequence is that of Terminase, small subunit gp18 from Escherichia coli (Bacteriophage T7).